The chain runs to 147 residues: Leghemoglobin 6 (147 aa).

Residues 2-147 (SFTDKQEALV…LATEIKKAMS (146 aa)) enclose the Globin domain. Tyrosine 25 and tyrosine 30 each carry nitrated tyrosine. Residue serine 45 participates in heme b binding. Serine 45 bears the Phosphoserine mark. Histidine 62 contributes to the O2 binding site. Heme b is bound by residues lysine 65, histidine 94, and lysine 97. Nitrated tyrosine is present on tyrosine 135.

The protein belongs to the plant globin family. In terms of assembly, monomer. In terms of processing, nitrated in effective nodules and particularly in hypoxic conditions; this mechanism may play a protective role in the symbiosis by buffering toxic peroxynitrite NO(2)(-). Nitration level decrease during nodule senescence. Post-translationally, phosphorylation at Ser-45 disrupts the molecular environment of its porphyrin ring oxygen binding pocket, thus leading to a reduced oxygen consumption and to the delivery of oxygen O(2) to symbiosomes. In terms of tissue distribution, root nodules.

It localises to the cytoplasm. The protein resides in the cytosol. It is found in the nucleus. Its function is as follows. Leghemoglobin that reversibly binds oxygen O(2) through a pentacoordinated heme iron. In root nodules, facilitates the diffusion of oxygen to the bacteroids while preventing the bacterial nitrogenase from being inactivated by buffering dioxygen, nitric oxide and carbon monoxide, and promoting the formation of reactive oxygen species (ROS, e.g. H(2)O(2)). This role is essential for symbiotic nitrogen fixation (SNF). The protein is Leghemoglobin 6 of Medicago truncatula (Barrel medic).